The following is a 576-amino-acid chain: Proline--tRNA ligase (576 aa).

It belongs to the class-II aminoacyl-tRNA synthetase family. ProS type 1 subfamily. In terms of assembly, homodimer.

It localises to the cytoplasm. The enzyme catalyses tRNA(Pro) + L-proline + ATP = L-prolyl-tRNA(Pro) + AMP + diphosphate. Functionally, catalyzes the attachment of proline to tRNA(Pro) in a two-step reaction: proline is first activated by ATP to form Pro-AMP and then transferred to the acceptor end of tRNA(Pro). As ProRS can inadvertently accommodate and process non-cognate amino acids such as alanine and cysteine, to avoid such errors it has two additional distinct editing activities against alanine. One activity is designated as 'pretransfer' editing and involves the tRNA(Pro)-independent hydrolysis of activated Ala-AMP. The other activity is designated 'posttransfer' editing and involves deacylation of mischarged Ala-tRNA(Pro). The misacylated Cys-tRNA(Pro) is not edited by ProRS. This is Proline--tRNA ligase from Bordetella bronchiseptica (strain ATCC BAA-588 / NCTC 13252 / RB50) (Alcaligenes bronchisepticus).